Here is a 947-residue protein sequence, read N- to C-terminus: Bifunctional glutamine synthetase adenylyltransferase/adenylyl-removing enzyme (947 aa).

Residues 1 to 440 are adenylyl removase; it reads MTPLSSPLSQ…VFNELIGDDE (440 aa). The adenylyl transferase stretch occupies residues 450-947; it reads SEPWREVWQD…ASWRKWLVAV (498 aa).

It belongs to the GlnE family. Requires Mg(2+) as cofactor.

The catalysed reaction is [glutamine synthetase]-O(4)-(5'-adenylyl)-L-tyrosine + phosphate = [glutamine synthetase]-L-tyrosine + ADP. It catalyses the reaction [glutamine synthetase]-L-tyrosine + ATP = [glutamine synthetase]-O(4)-(5'-adenylyl)-L-tyrosine + diphosphate. Functionally, involved in the regulation of glutamine synthetase GlnA, a key enzyme in the process to assimilate ammonia. When cellular nitrogen levels are high, the C-terminal adenylyl transferase (AT) inactivates GlnA by covalent transfer of an adenylyl group from ATP to specific tyrosine residue of GlnA, thus reducing its activity. Conversely, when nitrogen levels are low, the N-terminal adenylyl removase (AR) activates GlnA by removing the adenylyl group by phosphorolysis, increasing its activity. The regulatory region of GlnE binds the signal transduction protein PII (GlnB) which indicates the nitrogen status of the cell. This is Bifunctional glutamine synthetase adenylyltransferase/adenylyl-removing enzyme from Salmonella schwarzengrund (strain CVM19633).